We begin with the raw amino-acid sequence, 365 residues long: Glucose 1-dehydrogenase 1 (365 aa).

D38 is a binding site for Zn(2+). T40 is a substrate binding site. Zn(2+) is bound by residues H63 and E64. E115 and E151 together coordinate substrate. Residue E151 coordinates Zn(2+). NADP(+)-binding positions include 182–185 (NGSL), 207–208 (RR), 272–274 (LGV), and 301–303 (SVN). Residue N303 coordinates substrate.

Belongs to the zinc-containing alcohol dehydrogenase family. Glucose 1-dehydrogenase subfamily. Zn(2+) is required as a cofactor.

It catalyses the reaction D-glucose + NAD(+) = D-glucono-1,5-lactone + NADH + H(+). The catalysed reaction is D-glucose + NADP(+) = D-glucono-1,5-lactone + NADPH + H(+). Catalyzes the NAD(P)(+)-dependent oxidation of D-glucose to D-gluconate via gluconolactone. Can utilize both NAD(+) and NADP(+) as electron acceptor. Is involved in the degradation of glucose through a modified Entner-Doudoroff pathway. The sequence is that of Glucose 1-dehydrogenase 1 from Haloterrigena turkmenica (strain ATCC 51198 / DSM 5511 / JCM 9101 / NCIMB 13204 / VKM B-1734 / 4k) (Halococcus turkmenicus).